The primary structure comprises 313 residues: Fructose-1,6-bisphosphatase class 1 (313 aa).

Residues glutamate 90, aspartate 111, leucine 113, and aspartate 114 each coordinate Mg(2+). Substrate is bound by residues 114–117, tyrosine 222, and lysine 253; that span reads DGSS. Glutamate 259 is a Mg(2+) binding site.

This sequence belongs to the FBPase class 1 family. As to quaternary structure, homotetramer. Mg(2+) serves as cofactor.

It localises to the cytoplasm. It catalyses the reaction beta-D-fructose 1,6-bisphosphate + H2O = beta-D-fructose 6-phosphate + phosphate. Its pathway is carbohydrate biosynthesis; gluconeogenesis. In Geotalea uraniireducens (strain Rf4) (Geobacter uraniireducens), this protein is Fructose-1,6-bisphosphatase class 1.